A 260-amino-acid chain; its full sequence is Carbonic anhydrase 2 (260 aa).

Residue S2 is modified to N-acetylserine. S2 is subject to Phosphoserine. The region spanning 3-259 is the Alpha-carbonic anhydrase domain; the sequence is HHWGYGKHNG…LKGRQVKASF (257 aa). Residue H64 is the Proton donor/acceptor of the active site. Zn(2+) is bound by residues H94, H96, and H119. A phosphoserine mark is found at S165 and S172. 198–199 is a substrate binding site; sequence TT.

Belongs to the alpha-carbonic anhydrase family. Interacts with SLC4A4 and SLC26A6. Interaction with SLC4A7 regulates SLC4A7 transporter activity. Zn(2+) is required as a cofactor.

The protein resides in the cytoplasm. The protein localises to the cell membrane. The enzyme catalyses hydrogencarbonate + H(+) = CO2 + H2O. The catalysed reaction is urea = cyanamide + H2O. With respect to regulation, inhibited by acetazolamide. In terms of biological role, catalyzes the reversible hydration of carbon dioxide. Can also hydrate cyanamide to urea. Involved in the regulation of fluid secretion into the anterior chamber of the eye. Essential for bone resorption and osteoclast differentiation. Contributes to intracellular pH regulation in the duodenal upper villous epithelium during proton-coupled peptide absorption. Stimulates the chloride-bicarbonate exchange activity of SLC26A6. The chain is Carbonic anhydrase 2 (CA2) from Oryctolagus cuniculus (Rabbit).